Reading from the N-terminus, the 197-residue chain is Shikimate kinase (197 aa).

26-31 lines the ATP pocket; that stretch reads GSGKSR. Ser-30 is a binding site for Mg(2+). Residues Asp-48, Arg-72, and Gly-94 each contribute to the substrate site. Residue Arg-132 coordinates ATP. Substrate is bound at residue Arg-150.

It belongs to the shikimate kinase family. Monomer. It depends on Mg(2+) as a cofactor.

The protein localises to the cytoplasm. It catalyses the reaction shikimate + ATP = 3-phosphoshikimate + ADP + H(+). The protein operates within metabolic intermediate biosynthesis; chorismate biosynthesis; chorismate from D-erythrose 4-phosphate and phosphoenolpyruvate: step 5/7. Functionally, catalyzes the specific phosphorylation of the 3-hydroxyl group of shikimic acid using ATP as a cosubstrate. The protein is Shikimate kinase of Prochlorococcus marinus (strain MIT 9211).